Consider the following 200-residue polypeptide: Rubrerythrin (200 aa).

In terms of domain architecture, Ferritin-like diiron spans 12 to 155; the sequence is SIKGSKTEKH…ALLAHVEDGS (144 aa). Residues glutamate 29, glutamate 62, glutamate 103, glutamate 106, glutamate 137, histidine 140, cysteine 167, cysteine 170, cysteine 183, and cysteine 186 each contribute to the Fe(3+) site. In terms of domain architecture, Rubredoxin-like spans 162 to 200; sequence EIAWQCRNCGYVITSKKAPKLCPACAHPQAYFEPMKTNY.

As to quaternary structure, homodimer. Possesses two rubredoxin-like centers and two non-sulfur oxo-bridged di-iron centers per dimer. Fe(3+) is required as a cofactor.

Its subcellular location is the cytoplasm. May provide oxidative stress protection via catalytic reduction of intracellular hydrogen peroxide. The chain is Rubrerythrin (rbr) from Porphyromonas gingivalis (strain ATCC BAA-308 / W83).